The sequence spans 475 residues: Bifunctional protein HldE (475 aa).

The segment at M1–T318 is ribokinase. N195–E198 contacts ATP. The active site involves D264. The cytidylyltransferase stretch occupies residues M344 to R475.

It in the N-terminal section; belongs to the carbohydrate kinase PfkB family. The protein in the C-terminal section; belongs to the cytidylyltransferase family. As to quaternary structure, homodimer.

The catalysed reaction is D-glycero-beta-D-manno-heptose 7-phosphate + ATP = D-glycero-beta-D-manno-heptose 1,7-bisphosphate + ADP + H(+). It catalyses the reaction D-glycero-beta-D-manno-heptose 1-phosphate + ATP + H(+) = ADP-D-glycero-beta-D-manno-heptose + diphosphate. It participates in nucleotide-sugar biosynthesis; ADP-L-glycero-beta-D-manno-heptose biosynthesis; ADP-L-glycero-beta-D-manno-heptose from D-glycero-beta-D-manno-heptose 7-phosphate: step 1/4. Its pathway is nucleotide-sugar biosynthesis; ADP-L-glycero-beta-D-manno-heptose biosynthesis; ADP-L-glycero-beta-D-manno-heptose from D-glycero-beta-D-manno-heptose 7-phosphate: step 3/4. It functions in the pathway bacterial outer membrane biogenesis; LOS core biosynthesis. Functionally, catalyzes the phosphorylation of D-glycero-D-manno-heptose 7-phosphate at the C-1 position to selectively form D-glycero-beta-D-manno-heptose-1,7-bisphosphate. Catalyzes the ADP transfer from ATP to D-glycero-beta-D-manno-heptose 1-phosphate, yielding ADP-D-glycero-beta-D-manno-heptose. The chain is Bifunctional protein HldE from Haemophilus ducreyi (strain 35000HP / ATCC 700724).